We begin with the raw amino-acid sequence, 350 residues long: Blue-sensitive opsin (350 aa).

Residues 1–36 (MNGTEGPNFYVPMSNATGVVRSPFEYPQYYLAEPWA) lie on the Extracellular side of the membrane. N-linked (GlcNAc...) asparagine glycosylation is found at Asn-2 and Asn-15. A helical transmembrane segment spans residues 37 to 61 (FSILAAYMFFLIITGFPINFLTLYV). Residues 62–73 (TIEHKKLRTPLN) lie on the Cytoplasmic side of the membrane. Residues 74 to 98 (YILLNLAVADLFMVFGGFTTTMYTS) form a helical membrane-spanning segment. Over 99 to 113 (MHGYFVFGETGCNLE) the chain is Extracellular. Cys-110 and Cys-187 are joined by a disulfide. Residues 114 to 133 (GYFATLGGEISLWSLVVLAI) traverse the membrane as a helical segment. The Cytoplasmic portion of the chain corresponds to 134–152 (ERWVVVCKPISNFRFGENH). A helical membrane pass occupies residues 153-176 (AIMGLTLTWVMANACAMPPLFGWS). At 177–202 (RYIPEGLQCSCGIDYYTLKPEVNNES) the chain is on the extracellular side. Residue Asn-200 is glycosylated (N-linked (GlcNAc...) asparagine). Residues 203–230 (FVIYMFLVHFTIPLTIISFCYGRLVCAV) form a helical membrane-spanning segment. Residues 231-252 (KEAAAQQQESETTQRAEREVTR) are Cytoplasmic-facing. The chain crosses the membrane as a helical span at residues 253 to 276 (MVVIMVISFLVCWIPYASVAWYIF). Residues 277–284 (THQGSTFG) lie on the Extracellular side of the membrane. The helical transmembrane segment at 285 to 309 (PIFMTVPSFFAKSSSIYNPMIYICM) threads the bilayer. N6-(retinylidene)lysine is present on Lys-296. Residues 310-350 (NKQFRNCMITTLFCGKNPFEGEEEGSTTKTEASAVSSVSPA) are Cytoplasmic-facing. The segment at 330 to 350 (GEEEGSTTKTEASAVSSVSPA) is disordered.

This sequence belongs to the G-protein coupled receptor 1 family. Opsin subfamily. In terms of processing, phosphorylated on some or all of the serine and threonine residues present in the C-terminal region. Rod shaped photoreceptor cells which mediates vision in dim light.

It is found in the membrane. In terms of biological role, visual pigments are the light-absorbing molecules that mediate vision. They consist of an apoprotein, opsin, covalently linked to cis-retinal. The sequence is that of Blue-sensitive opsin from Conger conger (Conger eel).